The chain runs to 473 residues: Glucose-1-phosphate adenylyltransferase small subunit, chloroplastic/amyloplastic (473 aa).

Positions 1 to 36 are disordered; the sequence is MDVPLASKTFPSPSPSKREQCNIDGHKSSSKHADLN. Over residues 16–36 the composition is skewed to basic and acidic residues; that stretch reads SKREQCNIDGHKSSSKHADLN.

This sequence belongs to the bacterial/plant glucose-1-phosphate adenylyltransferase family. Heterotetramer. Abundantly expressed in the whole grains, a slightly less abundant expression is seen in leaves, while a low level expression is seen in the roots. A greater expression is seen in the endosperm than in the embryo and pericarp layers.

The protein resides in the plastid. It is found in the chloroplast. Its subcellular location is the amyloplast. The catalysed reaction is alpha-D-glucose 1-phosphate + ATP + H(+) = ADP-alpha-D-glucose + diphosphate. It participates in glycan biosynthesis; starch biosynthesis. Insensitive to 3'phosphoglycerate and orthophosphate. Functionally, this protein plays a role in synthesis of starch. It catalyzes the synthesis of the activated glycosyl donor, ADP-glucose from Glc-1-P and ATP. This Triticum aestivum (Wheat) protein is Glucose-1-phosphate adenylyltransferase small subunit, chloroplastic/amyloplastic (AGP-S).